We begin with the raw amino-acid sequence, 281 residues long: UPF0294 protein VC_2238 (281 aa).

It belongs to the UPF0294 family.

The protein localises to the cytoplasm. This is UPF0294 protein VC_2238 from Vibrio cholerae serotype O1 (strain ATCC 39315 / El Tor Inaba N16961).